The sequence spans 189 residues: Ras-like protein 1 (189 aa).

A GTP-binding site is contributed by 10-17 (GAGGVGKS). The short motif at 32-40 (YDPTIEDSY) is the Effector region element. GTP contacts are provided by residues 57–61 (DTAGQ) and 116–119 (NKCD). A Cysteine methyl ester modification is found at Cys-186. A lipid anchor (S-geranylgeranyl cysteine) is attached at Cys-186. The propeptide at 187–189 (KML) is removed in mature form.

The protein belongs to the small GTPase superfamily. Ras family.

The protein localises to the cell membrane. The enzyme catalyses GTP + H2O = GDP + phosphate + H(+). Its activity is regulated as follows. Alternates between an inactive form bound to GDP and an active form bound to GTP. Activated by a guanine nucleotide-exchange factor (GEF) and inactivated by a GTPase-activating protein (GAP). Functionally, ras proteins bind GDP/GTP and possess intrinsic GTPase activity. Plays a role in eye development by regulating cell growth, survival of postmitotic ommatidial cells and differentiation of photoreceptor cells. During larval development, mediates Ptth/tor signaling leading to the production of ecdysone, a hormone required for the initiation of metamorphosis. This chain is Ras-like protein 1, found in Drosophila virilis (Fruit fly).